A 178-amino-acid polypeptide reads, in one-letter code: Adenine phosphoribosyltransferase (178 aa).

This sequence belongs to the purine/pyrimidine phosphoribosyltransferase family. As to quaternary structure, homodimer.

The protein resides in the cytoplasm. The catalysed reaction is AMP + diphosphate = 5-phospho-alpha-D-ribose 1-diphosphate + adenine. Its pathway is purine metabolism; AMP biosynthesis via salvage pathway; AMP from adenine: step 1/1. In terms of biological role, catalyzes a salvage reaction resulting in the formation of AMP, that is energically less costly than de novo synthesis. This Helicobacter hepaticus (strain ATCC 51449 / 3B1) protein is Adenine phosphoribosyltransferase.